Consider the following 473-residue polypeptide: Eukaryotic translation initiation factor 2 subunit gamma (473 aa).

The region spanning 40–250 (QATINIGTIG…AICNIAPPNY (211 aa)) is the tr-type G domain. A G1 region spans residues 49–56 (GHVAHGKS). Residue 52 to 57 (AHGKSS) coordinates GTP. Residues 77 to 81 (NITIK) form a G2 region. The G3 stretch occupies residues 135–138 (DCPG). GTP contacts are provided by residues 193-196 (NKMD) and 228-230 (SAQ). The interval 193 to 196 (NKMD) is G4. The G5 stretch occupies residues 228 to 230 (SAQ). The tract at residues 458–470 (GKVRSGGTLCEVV) is interacts with CDC123.

Belongs to the TRAFAC class translation factor GTPase superfamily. Classic translation factor GTPase family. EIF2G subfamily. In terms of assembly, eukaryotic translation initiation factor 2 eIF2 is a heterotrimeric complex composed of an alpha, a beta and a gamma subunit. The factors eIF-1, eIF-2, eIF-3, TIF5/eIF-5 and methionyl-tRNAi form a multifactor complex (MFC) that may bind to the 40S ribosome.

The protein resides in the cytoplasm. It is found in the cytosol. The catalysed reaction is GTP + H2O = GDP + phosphate + H(+). Functionally, as a subunit of eukaryotic initiation factor 2 eIF2, involved in the early steps of protein synthesis. In the presence of GTP, eIF-2 forms a ternary complex with initiator tRNA Met-tRNAi and then recruits the 40S ribosomal complex and initiation factors eIF-1, eIF-1A and eIF-3 to form the 43S pre-initiation complex (43S PIC), a step that determines the rate of protein translation. The 43S PIC binds to mRNA and scans downstream to the initiation codon, where it forms a 48S initiation complex by codon-anticodon base pairing. This leads to the displacement of eIF-1 to allow GTPase-activating protein (GAP) eIF-5-mediated hydrolysis of eIF2-bound GTP. Hydrolysis of GTP and release of Pi, which makes GTP hydrolysis irreversible, causes the release of the eIF-2-GDP binary complex from the 40S subunit, an event that is essential for the subsequent joining of the 60S ribosomal subunit to form an elongation-competent 80S ribosome. In order for eIF-2 to recycle and catalyze another round of initiation, the GDP bound to eIF-2 must be exchanged with GTP by way of a reaction catalyzed by GDP-GTP exchange factor (GEF) eIF-2B. The protein is Eukaryotic translation initiation factor 2 subunit gamma of Cryptococcus neoformans var. grubii serotype A (strain H99 / ATCC 208821 / CBS 10515 / FGSC 9487) (Filobasidiella neoformans var. grubii).